We begin with the raw amino-acid sequence, 58 residues long: Mu-diguetoxin-Dc1b (58 aa).

4 disulfide bridges follow: Cys-12/Cys-26, Cys-20/Cys-40, Cys-25/Cys-54, and Cys-42/Cys-52.

The protein belongs to the neurotoxin 26 (DTX) family. As to expression, expressed by the venom gland.

It localises to the secreted. In terms of biological role, acts by delaying the inactivation of presynaptic voltage-sensitive sodium channels (Nav). Acts against insects and cause a progressive spastic paralysis. The sequence is that of Mu-diguetoxin-Dc1b from Diguetia canities (Desert bush spider).